The chain runs to 435 residues: MELKNKKLSLWEAVSMAVGVMIGASIFSIFGVGAKIAGRNLPETFILSGIYALLVAYSYTKLGAKIVSNAGPIAFIHKAIGDNIITGALSILLWMSYVISIALFAKGFAGYFLPLINAPINTFNIAITEIGIVAFFTALNFFGSKAVGRAEFFIVLVKLLILGLFIFAGLITIHPSYVIPDLAPSAVSGMIFASAIFFLSYMGFGVITNASEHIENPKKNVPRAIFISILIVMFVYVGVAISAIGNLPIDELIKASENALAVAAKPFLGNLGFLLISIGALFSISSAMNATIYGGANVAYSLAKDGELPEFFERKVWFKSTEGLYITSALGVLFALLFNMEGVASITSAVFMVIYLFVILSHYILIDEVGGRKEIVIFSFIVVLGVFLLLLYYQWITNRFVFYGIIATFIGVLIFEIIYRKVTKRTFSNNMYVKS.

Transmembrane regions (helical) follow at residues 14 to 34 (VSMAVGVMIGASIFSIFGVGA), 44 to 64 (TFILSGIYALLVAYSYTKLGA), 84 to 104 (IITGALSILLWMSYVISIALF), 123 to 143 (FNIAITEIGIVAFFTALNFFG), 153 to 173 (FIVLVKLLILGLFIFAGLITI), 187 to 207 (VSGMIFASAIFFLSYMGFGVI), 224 to 244 (AIFISILIVMFVYVGVAISAI), 267 to 287 (FLGNLGFLLISIGALFSISSA), 324 to 344 (LYITSALGVLFALLFNMEGVA), 346 to 366 (ITSAVFMVIYLFVILSHYILI), 375 to 395 (IVIFSFIVVLGVFLLLLYYQW), and 400 to 420 (FVFYGIIATFIGVLIFEIIYR).

The protein localises to the cell membrane. This is an uncharacterized protein from Methanocaldococcus jannaschii (strain ATCC 43067 / DSM 2661 / JAL-1 / JCM 10045 / NBRC 100440) (Methanococcus jannaschii).